Reading from the N-terminus, the 386-residue chain is Putative 8-amino-7-oxononanoate synthase (386 aa).

R22 contributes to the substrate binding site. Residue 109-110 (GY) coordinates pyridoxal 5'-phosphate. H134 contacts substrate. Pyridoxal 5'-phosphate contacts are provided by residues S182, 207–210 (DEAH), and 238–241 (TLSK). The residue at position 241 (K241) is an N6-(pyridoxal phosphate)lysine. A substrate-binding site is contributed by T356.

The protein belongs to the class-II pyridoxal-phosphate-dependent aminotransferase family. BioF subfamily. In terms of assembly, homodimer. Requires pyridoxal 5'-phosphate as cofactor.

It catalyses the reaction 6-carboxyhexanoyl-[ACP] + L-alanine + H(+) = (8S)-8-amino-7-oxononanoate + holo-[ACP] + CO2. It functions in the pathway cofactor biosynthesis; biotin biosynthesis. Its function is as follows. Catalyzes the decarboxylative condensation of pimeloyl-[acyl-carrier protein] and L-alanine to produce 8-amino-7-oxononanoate (AON), [acyl-carrier protein], and carbon dioxide. This chain is Putative 8-amino-7-oxononanoate synthase (bioF), found in Trichormus variabilis (strain ATCC 29413 / PCC 7937) (Anabaena variabilis).